Here is a 572-residue protein sequence, read N- to C-terminus: Probable transporter MCH1 (572 aa).

Residues 1–29 show a composition bias toward polar residues; the sequence is MSSSAPDDTQASRLDADQISTRSSSYASD. A disordered region spans residues 1–39; it reads MSSSAPDDTQASRLDADQISTRSSSYASDNDTDSTETRI. Asparagine 30 carries N-linked (GlcNAc...) asparagine glycosylation. Transmembrane regions (helical) follow at residues 50–70, 89–109, 116–136, 159–179, 193–213, 232–252, 335–355, 426–446, 459–479, and 488–508; these read LLAF…VVFS, AVAI…GYIC, PLAL…AGVY, FLML…MAAV, GLAL…LSQA, VFRF…LGTF, LAFL…GTII, FMAF…SGLV, LVGA…TIIW, and YGLI…VYSA. N-linked (GlcNAc...) asparagine glycosylation is present at asparagine 515. The helical transmembrane segment at 539 to 559 threads the bilayer; it reads PTYWAETITVWIAVGLLLWAW.

Belongs to the major facilitator superfamily.

The protein resides in the vacuole membrane. Functionally, probable transporter. The chain is Probable transporter MCH1 (MCH1) from Gibberella zeae (strain ATCC MYA-4620 / CBS 123657 / FGSC 9075 / NRRL 31084 / PH-1) (Wheat head blight fungus).